Here is a 62-residue protein sequence, read N- to C-terminus: uncharacterized protein (62 aa).

An N-terminal signal peptide occupies residues 1-19 (MKLIILLFVVAAFVTLAMG).

This is an uncharacterized protein from Lepidoptera (butterflies and moths).